The following is a 45-amino-acid chain: EKGFGFISTENGQDVFAHFSAIQTNGFKTLEEGQKVEFDVEEGQR.

In terms of domain architecture, CSD spans 1–45; that stretch reads EKGFGFISTENGQDVFAHFSAIQTNGFKTLEEGQKVEFDVEEGQR.

In terms of assembly, homodimer.

It is found in the cytoplasm. This Streptococcus dysgalactiae protein is Major cold shock protein (cspA).